A 152-amino-acid chain; its full sequence is Xanthine-guanine phosphoribosyltransferase (152 aa).

Residues 37-38 (RG), Arg69, and 88-96 (DDLVDTGGT) contribute to the 5-phospho-alpha-D-ribose 1-diphosphate site. Arg69 serves as a coordination point for GMP. Asp89 lines the Mg(2+) pocket. The guanine site is built by Asp92 and Ile135. Xanthine-binding residues include Asp92 and Ile135. GMP contacts are provided by residues 92 to 96 (DTGGT) and 134 to 135 (WI).

Belongs to the purine/pyrimidine phosphoribosyltransferase family. XGPT subfamily. As to quaternary structure, homotetramer. Mg(2+) is required as a cofactor.

It is found in the cell inner membrane. The enzyme catalyses GMP + diphosphate = guanine + 5-phospho-alpha-D-ribose 1-diphosphate. It carries out the reaction XMP + diphosphate = xanthine + 5-phospho-alpha-D-ribose 1-diphosphate. The catalysed reaction is IMP + diphosphate = hypoxanthine + 5-phospho-alpha-D-ribose 1-diphosphate. The protein operates within purine metabolism; GMP biosynthesis via salvage pathway; GMP from guanine: step 1/1. Its pathway is purine metabolism; XMP biosynthesis via salvage pathway; XMP from xanthine: step 1/1. In terms of biological role, purine salvage pathway enzyme that catalyzes the transfer of the ribosyl-5-phosphate group from 5-phospho-alpha-D-ribose 1-diphosphate (PRPP) to the N9 position of the 6-oxopurines guanine and xanthine to form the corresponding ribonucleotides GMP (guanosine 5'-monophosphate) and XMP (xanthosine 5'-monophosphate), with the release of PPi. To a lesser extent, also acts on hypoxanthine. In Photobacterium profundum (strain SS9), this protein is Xanthine-guanine phosphoribosyltransferase.